The primary structure comprises 382 residues: Flap endonuclease 1 (382 aa).

The segment at 1–104 (MGIHGLAKLI…GELAKRSERR (104 aa)) is N-domain. Mg(2+) is bound at residue D34. Positions 47 and 70 each coordinate DNA. Residues D86, E158, E160, D179, and D181 each coordinate Mg(2+). An I-domain region spans residues 122–253 (NIEKFNKRLV…KRAIDLIRQH (132 aa)). E158 lines the DNA pocket. DNA-binding residues include G231 and D233. D233 serves as a coordination point for Mg(2+). The interaction with PCNA stretch occupies residues 336–344 (TQGRLDDFF). Residues 352 to 382 (STKRKEVESKGSAKKKAKTAGTPAGKFKRGK) form a disordered region.

This sequence belongs to the XPG/RAD2 endonuclease family. FEN1 subfamily. Interacts with PCNA. Three molecules of fen1 bind to one PCNA trimer with each molecule binding to one PCNA monomer. PCNA stimulates the nuclease activity without altering cleavage specificity. Requires Mg(2+) as cofactor. Post-translationally, phosphorylated. Phosphorylation upon DNA damage induces relocalization to the nuclear plasma.

It localises to the nucleus. The protein resides in the nucleolus. It is found in the nucleoplasm. Its subcellular location is the mitochondrion. Structure-specific nuclease with 5'-flap endonuclease and 5'-3' exonuclease activities involved in DNA replication and repair. During DNA replication, cleaves the 5'-overhanging flap structure that is generated by displacement synthesis when DNA polymerase encounters the 5'-end of a downstream Okazaki fragment. It enters the flap from the 5'-end and then tracks to cleave the flap base, leaving a nick for ligation. Also involved in the long patch base excision repair (LP-BER) pathway, by cleaving within the apurinic/apyrimidinic (AP) site-terminated flap. Acts as a genome stabilization factor that prevents flaps from equilibrating into structures that lead to duplications and deletions. Also possesses 5'-3' exonuclease activity on nicked or gapped double-stranded DNA, and exhibits RNase H activity. Also involved in replication and repair of rDNA and in repairing mitochondrial DNA. This Xenopus tropicalis (Western clawed frog) protein is Flap endonuclease 1 (fen1).